The following is a 136-amino-acid chain: Serine--glyoxylate aminotransferase (136 aa).

The protein belongs to the class-V pyridoxal-phosphate-dependent aminotransferase family. As to quaternary structure, homodimer. Requires pyridoxal 5'-phosphate as cofactor. Expressed in leaves but not in root tissue or seedlings.

It localises to the peroxisome. It carries out the reaction glyoxylate + L-serine = 3-hydroxypyruvate + glycine. The enzyme catalyses glyoxylate + L-alanine = glycine + pyruvate. Inhibited by aminooxyacetate. This Zea mays (Maize) protein is Serine--glyoxylate aminotransferase.